The following is a 27-amino-acid chain: QKLCERPSGTWSGVCGNNNACKNQCIN.

Glutamine 1 is subject to Pyrrolidone carboxylic acid.

The protein belongs to the DEFL family. In terms of assembly, forms oligomers in its native state.

Functionally, possesses antifungal activity sensitive to inorganic cations. The polypeptide is Defensin-like protein 1 (Brassica campestris (Field mustard)).